The sequence spans 217 residues: Thymidylate kinase (217 aa).

ATP is bound at residue 7–14 (GIDGAGKS).

Belongs to the thymidylate kinase family.

It catalyses the reaction dTMP + ATP = dTDP + ADP. In terms of biological role, phosphorylation of dTMP to form dTDP in both de novo and salvage pathways of dTTP synthesis. The sequence is that of Thymidylate kinase from Pelodictyon phaeoclathratiforme (strain DSM 5477 / BU-1).